The primary structure comprises 327 residues: Malate dehydrogenase (327 aa).

11 to 17 (GAAGQIS) contributes to the NAD(+) binding site. Positions 92 and 98 each coordinate substrate. NAD(+)-binding positions include N105, Q112, and 129-131 (VGN). Substrate contacts are provided by N131 and R162. H187 serves as the catalytic Proton acceptor.

Belongs to the LDH/MDH superfamily. MDH type 2 family.

It catalyses the reaction (S)-malate + NAD(+) = oxaloacetate + NADH + H(+). In terms of biological role, catalyzes the reversible oxidation of malate to oxaloacetate. This is Malate dehydrogenase from Saccharophagus degradans (strain 2-40 / ATCC 43961 / DSM 17024).